A 342-amino-acid chain; its full sequence is Porphobilinogen deaminase (342 aa).

At Cys249 the chain carries S-(dipyrrolylmethanemethyl)cysteine. Positions 323-342 (AAAKQGAAEDGAADSAATGE) are disordered.

It belongs to the HMBS family. As to quaternary structure, monomer. Dipyrromethane is required as a cofactor.

It catalyses the reaction 4 porphobilinogen + H2O = hydroxymethylbilane + 4 NH4(+). It functions in the pathway porphyrin-containing compound metabolism; protoporphyrin-IX biosynthesis; coproporphyrinogen-III from 5-aminolevulinate: step 2/4. Tetrapolymerization of the monopyrrole PBG into the hydroxymethylbilane pre-uroporphyrinogen in several discrete steps. This is Porphobilinogen deaminase from Paraburkholderia phytofirmans (strain DSM 17436 / LMG 22146 / PsJN) (Burkholderia phytofirmans).